A 378-amino-acid polypeptide reads, in one-letter code: Spermidine/putrescine import ATP-binding protein PotA (378 aa).

One can recognise an ABC transporter domain in the interval 18 to 248 (VLLSGISKSF…PKNLFVAGFI (231 aa)). ATP is bound at residue 50–57 (GPSGCGKT).

It belongs to the ABC transporter superfamily. Spermidine/putrescine importer (TC 3.A.1.11.1) family. As to quaternary structure, the complex is composed of two ATP-binding proteins (PotA), two transmembrane proteins (PotB and PotC) and a solute-binding protein (PotD).

The protein resides in the cell inner membrane. The enzyme catalyses ATP + H2O + polyamine-[polyamine-binding protein]Side 1 = ADP + phosphate + polyamineSide 2 + [polyamine-binding protein]Side 1.. Part of the ABC transporter complex PotABCD involved in spermidine/putrescine import. Responsible for energy coupling to the transport system. In Salmonella paratyphi A (strain ATCC 9150 / SARB42), this protein is Spermidine/putrescine import ATP-binding protein PotA.